The following is a 274-amino-acid chain: 2,3,4,5-tetrahydropyridine-2,6-dicarboxylate N-succinyltransferase (274 aa).

Belongs to the transferase hexapeptide repeat family.

It localises to the cytoplasm. The catalysed reaction is (S)-2,3,4,5-tetrahydrodipicolinate + succinyl-CoA + H2O = (S)-2-succinylamino-6-oxoheptanedioate + CoA. It functions in the pathway amino-acid biosynthesis; L-lysine biosynthesis via DAP pathway; LL-2,6-diaminopimelate from (S)-tetrahydrodipicolinate (succinylase route): step 1/3. The chain is 2,3,4,5-tetrahydropyridine-2,6-dicarboxylate N-succinyltransferase from Salmonella heidelberg (strain SL476).